We begin with the raw amino-acid sequence, 363 residues long: Phosphoserine aminotransferase (363 aa).

Residue Arg42 coordinates L-glutamate. Pyridoxal 5'-phosphate-binding positions include 76 to 77 (GR), Trp102, Thr156, Asp175, and Gln198. Lys199 bears the N6-(pyridoxal phosphate)lysine mark. A pyridoxal 5'-phosphate-binding site is contributed by 240–241 (NT).

The protein belongs to the class-V pyridoxal-phosphate-dependent aminotransferase family. SerC subfamily. As to quaternary structure, homodimer. Pyridoxal 5'-phosphate serves as cofactor.

It is found in the cytoplasm. It catalyses the reaction O-phospho-L-serine + 2-oxoglutarate = 3-phosphooxypyruvate + L-glutamate. The enzyme catalyses 4-(phosphooxy)-L-threonine + 2-oxoglutarate = (R)-3-hydroxy-2-oxo-4-phosphooxybutanoate + L-glutamate. Its pathway is amino-acid biosynthesis; L-serine biosynthesis; L-serine from 3-phospho-D-glycerate: step 2/3. It functions in the pathway cofactor biosynthesis; pyridoxine 5'-phosphate biosynthesis; pyridoxine 5'-phosphate from D-erythrose 4-phosphate: step 3/5. Catalyzes the reversible conversion of 3-phosphohydroxypyruvate to phosphoserine and of 3-hydroxy-2-oxo-4-phosphonooxybutanoate to phosphohydroxythreonine. This chain is Phosphoserine aminotransferase, found in Shewanella denitrificans (strain OS217 / ATCC BAA-1090 / DSM 15013).